Reading from the N-terminus, the 154-residue chain is Cold shock domain-containing protein C2 (154 aa).

Disordered regions lie at residues Met1–Trp22 and Glu36–Ala62. Ser19 is modified (phosphoserine). The CSD domain maps to Val69–Thr136.

In terms of tissue distribution, brain-specific. Expression restricted to the pyramidal neurons of the cerebral cortex and in the Purkinje cells of the cerebellum.

The protein localises to the nucleus. It is found in the cytoplasm. RNA-binding factor which binds specifically to the very 3'-UTR ends of both histone H1 and H3.3 mRNAs, encompassing the polyadenylation signal. Might play a central role in the negative regulation of histone variant synthesis in the developing brain. This is Cold shock domain-containing protein C2 (Csdc2) from Rattus norvegicus (Rat).